Here is a 119-residue protein sequence, read N- to C-terminus: Fluoride-specific ion channel FluC 1 (119 aa).

4 helical membrane passes run 2 to 22 (TGAVAPPAVLVAAGGALGAVL), 37 to 57 (AGTLVVNVVGSFVLAALTFAA), 62 to 82 (TMLLFGTGACGAFTTFASFSV), and 99 to 119 (HALGNLLGAGLAVALAWLLVA). Gly72 and Thr75 together coordinate Na(+).

It belongs to the fluoride channel Fluc/FEX (TC 1.A.43) family.

It localises to the cell membrane. It catalyses the reaction fluoride(in) = fluoride(out). With respect to regulation, na(+) is not transported, but it plays an essential structural role and its presence is essential for fluoride channel function. In terms of biological role, fluoride-specific ion channel. Important for reducing fluoride concentration in the cell, thus reducing its toxicity. The chain is Fluoride-specific ion channel FluC 1 from Halobacterium salinarum (strain ATCC 700922 / JCM 11081 / NRC-1) (Halobacterium halobium).